We begin with the raw amino-acid sequence, 313 residues long: Glucan 1,3-beta-glucosidase (313 aa).

The first 23 residues, 1–23, serve as a signal peptide directing secretion; sequence MRFSTTLATAATALFFTASQVSA. The active-site Proton donor is the Glu124. Asn202 carries an N-linked (GlcNAc...) asparagine glycan. The active-site Nucleophile is Glu233. An N-linked (GlcNAc...) asparagine glycan is attached at Asn284.

This sequence belongs to the glycosyl hydrolase 17 family.

The protein localises to the secreted. Its subcellular location is the cell wall. The catalysed reaction is Successive hydrolysis of beta-D-glucose units from the non-reducing ends of (1-&gt;3)-beta-D-glucans, releasing alpha-glucose.. Glucanases possibly play a role in cell expansion during growth, in cell-cell fusion during mating, and in spore release during sporulation. This enzyme may be involved in beta-glucan degradation and also function biosynthetically as a transglycosylase. The polypeptide is Glucan 1,3-beta-glucosidase (BGL2) (Saccharomyces cerevisiae (strain ATCC 204508 / S288c) (Baker's yeast)).